Here is a 443-residue protein sequence, read N- to C-terminus: MRITDTAGFHAWFAERGAAHRYRITRTPLHDLEGWYTDPASGDVRHRSGRFFSIEGLRYGRQEPDGPAWTQPIIRQPETGVLGVLIKWFDGVPHLLMQAKMEPGNINTLQVSPTVQATFSNYTRVHHGSPVRYIDHFLTPGAGDRVHYDALQSEQGSWFLGKRNRNIVVETTGEIPVHEDFCWVPRPVMAELLRVDNLVNMDSRTVLAGLPDDPGEGSVPRRAVEKPLHDTAALLHWFTGAKVRHRPERTTIPLSRVGGWRRDDDRGEIVHETGRYFRIIGVDVEADSREVTSWSQPMLAPVGRGVVAFVSKEIHGERHLLVQARAEAGTFDAVELGPTVQCNPGNLPDGAPRPPYLDTVLTARPEQVLFDTVHSEEGGRFYHAENRYLVLDGDDVPVDVPEDYTWMTVRQLTRAGRIGNLVDVEARTLLACVRTLPDHGASR.

DTDP-4-dehydro-6-deoxy-alpha-D-glucose is bound by residues Trp-35, 118-122 (TFSNY), Ser-157, Trp-260, Arg-325, 341-343 (QCN), 346-347 (NL), and 377-380 (EGGR).

Belongs to the hexose 2,3-dehydratase family. Homodimer.

It catalyses the reaction dTDP-4-dehydro-6-deoxy-alpha-D-glucose = dTDP-3,4-didehydro-2,6-dideoxy-alpha-D-glucose + H2O. Its pathway is antibiotic biosynthesis; granaticin biosynthesis. In terms of biological role, involved in the biosynthesis of the 2,6-deoxysugar, dTDP-L-rhodinose, attached to the benzoisochromane quinone chromophore to produce the aglycone antibiotics granaticin and granaticin B. Catalyzes the removal of the hydroxyl group at position C-2 of the hexose ring of dTDP-4-dehydro-6-deoxy-alpha-D-glucopyranose, and the oxidation of the hydroxyl group at position C-3 to form a carbonyl functionality. The product of the reaction, dTDP-2,6-dideoxy-D-glycero-hex-2-enos-4-ulose, is a highly unstable diketosugar, which spontaneously forms dTDP-3,4-didehydro-2,6-dideoxy-alpha-D-glucose. This is dTDP-4-dehydro-6-deoxy-alpha-D-glucopyranose 2,3-dehydratase from Streptomyces violaceoruber.